Consider the following 253-residue polypeptide: Endonuclease NucS (253 aa).

A disordered region spans residues Ile63–Ala91. Polar residues predominate over residues Thr71–Ser87.

This sequence belongs to the NucS endonuclease family.

It is found in the cytoplasm. Its function is as follows. Cleaves both 3' and 5' ssDNA extremities of branched DNA structures. In Corynebacterium kroppenstedtii (strain DSM 44385 / JCM 11950 / CIP 105744 / CCUG 35717), this protein is Endonuclease NucS.